A 428-amino-acid chain; its full sequence is MAENDVDNELLDYEDDEVETAAGGDGAEAPAKKDVKGSYVSIHSSGFRDFLLKPELLRAIVDCGFEHPSEVQHECIPQAILGMDVLCQAKSGMGKTAVFVLATLQQLEPVTGQVSVLVMCHTRELAFQISKEYERFSKYMPSVKVAVFFGGLSIKKDEEVLKKNCPHIVVGTPGRILALARNKSLNLKHIKHFILDECDKMLEQLDMRRDVQEIFRMTPHEKQVMMFSATLSKEIRPVCRKFMQDPMEIFVDDETKLTLHGLQQYYVKLKDNEKNRKLFDLLDVLEFNQVVIFVKSVQRCIALAQLLVEQNFPAIAIHRGMPQEERLSRYQQFKDFQRRILVATNLFGRGMDIERVNIAFNYDMPEDSDTYLHRVARAGRFGTKGLAITFVSDENDAKILNDVQDRFEVNISELPDEIDISSYIEQTR.

Residues 1–19 are compositionally biased toward acidic residues; sequence MAENDVDNELLDYEDDEVE. Residues 1–31 form a disordered region; the sequence is MAENDVDNELLDYEDDEVETAAGGDGAEAPA. Ala2 carries the post-translational modification N-acetylalanine. Lys36 carries the post-translational modification N6-acetyllysine; alternate. Lys36 is covalently cross-linked (Glycyl lysine isopeptide (Lys-Gly) (interchain with G-Cter in SUMO2); alternate). Ser38 and Ser41 each carry phosphoserine. The short motif at 45-73 is the Q motif element; it reads SGFRDFLLKPELLRAIVDCGFEHPSEVQH. Residues 76-249 form the Helicase ATP-binding domain; it reads IPQAILGMDV…RKFMQDPMEI (174 aa). 89–96 serves as a coordination point for ATP; that stretch reads AKSGMGKT. Thr172 bears the Phosphothreonine mark. A DECD box motif is present at residues 196–199; sequence DECD. Positions 261-422 constitute a Helicase C-terminal domain; sequence GLQQYYVKLK…ELPDEIDISS (162 aa).

This sequence belongs to the DEAD box helicase family. DECD subfamily. In terms of assembly, homodimer, and heterodimer with DDX39A. DDX39B interacts with the THO subcomplex to form the THO-DDX39B complex which multimerizes into a 28-subunit tetrameric assembly. Component of the transcription/export (TREX) complex at least composed of ALYREF/THOC4, DDX39B, SARNP/CIP29, CHTOP and the THO subcomplex; in the complex interacts with THOC2. THOC1-THOC2-THOC3-DDX39B subcomplex is sufficient for the interaction with export factor NXF1-NXT1. TREX seems to have a dynamic structure involving ATP-dependent remodeling. Within the TREX complex bridges ALYREF/THOC4 and the THO subcomplex, and, in a ATP-dependent manner, ALYREF/THOC4 and SARNP/CIP29. Component of the spliceosome. Interacts directly with U2AF2. Interacts with RBM8A, RNPS1 and SRRM1, FYTTD1/UIF, THOC1, MX1 and POLDIP3. Interacts with LUZP4. Interacts with SARNP/CIP29 (via the C-terminal domain); the interaction is direct and facilitates RNA binding of DDX39B.

Its subcellular location is the nucleus. The protein localises to the nucleus speckle. The protein resides in the cytoplasm. The catalysed reaction is ATP + H2O = ADP + phosphate + H(+). Involved in nuclear export of spliced and unspliced mRNA. Component of the TREX complex which is thought to couple mRNA transcription, processing and nuclear export, and specifically associates with spliced mRNA and not with unspliced pre-mRNA. The TREX complex is recruited to spliced mRNAs by a transcription-independent mechanism, binds to mRNA upstream of the exon-junction complex (EJC) and is recruited in a splicing- and cap-dependent manner to a region near the 5' end of the mRNA where it functions in mRNA export to the cytoplasm via the TAP/NXF1 pathway. The THOC1-THOC2-THOC3 core complex alone is sufficient to promote ATPase activity of DDX39B; in the complex THOC2 is the only component that directly interacts with DDX39B. Associates with SARNP/CIP29, which facilitates RNA binding of DDX39B and likely plays a role in mRNA export. May undergo several rounds of ATP hydrolysis during assembly of TREX to drive subsequent loading of components such as ALYREF/THOC4 and CHTOP onto mRNA. Also associates with pre-mRNA independent of ALYREF/THOC4. Involved in the nuclear export of intronless mRNA; the ATP-bound form is proposed to recruit export adapter ALYREF/THOC4 to intronless mRNA; its ATPase activity is cooperatively stimulated by RNA and ALYREF/THOC4 and ATP hydrolysis is thought to trigger the dissociation from RNA to allow the association of ALYREF/THOC4 and the NXF1-NXT1 heterodimer. Involved in transcription elongation and genome stability. Its function is as follows. Splice factor that is required for the first ATP-dependent step in spliceosome assembly and for the interaction of U2 snRNP with the branchpoint. Has both RNA-stimulated ATP binding/hydrolysis activity and ATP-dependent RNA unwinding activity. Even with the stimulation of RNA, the ATPase activity is weak. Can only hydrolyze ATP but not other NTPs. The RNA stimulation of ATPase activity does not have a strong preference for the sequence and length of the RNA. However, ssRNA stimulates the ATPase activity much more strongly than dsRNA. Can unwind 5' or 3' overhangs or blunt end RNA duplexes in vitro. The ATPase and helicase activities are not influenced by U2AF2; the effect of ALYREF/THOC4 is reported conflictingly. The chain is Spliceosome RNA helicase DDX39B (DDX39B) from Bos taurus (Bovine).